Here is a 968-residue protein sequence, read N- to C-terminus: RNA polymerase-associated protein RapA (968 aa).

Positions D164–N334 constitute a Helicase ATP-binding domain. Position 177–184 (D177–T184) interacts with ATP. Residues D280 to H283 carry the DEAH box motif. Residues R490 to G662 enclose the Helicase C-terminal domain.

It belongs to the SNF2/RAD54 helicase family. RapA subfamily. In terms of assembly, interacts with the RNAP. Has a higher affinity for the core RNAP than for the holoenzyme. Its ATPase activity is stimulated by binding to RNAP.

Its function is as follows. Transcription regulator that activates transcription by stimulating RNA polymerase (RNAP) recycling in case of stress conditions such as supercoiled DNA or high salt concentrations. Probably acts by releasing the RNAP, when it is trapped or immobilized on tightly supercoiled DNA. Does not activate transcription on linear DNA. Probably not involved in DNA repair. The protein is RNA polymerase-associated protein RapA of Escherichia fergusonii (strain ATCC 35469 / DSM 13698 / CCUG 18766 / IAM 14443 / JCM 21226 / LMG 7866 / NBRC 102419 / NCTC 12128 / CDC 0568-73).